Reading from the N-terminus, the 74-residue chain is Pelophylaxin-3 (74 aa).

Positions 1-22 are cleaved as a signal peptide; it reads MFTLKKSLLLVFFLGTISLSLC. The propeptide occupies 23–39; sequence EDERNADEDDGEMTEEV. Cys-68 and Cys-74 form a disulfide bridge.

In terms of tissue distribution, expressed by the skin glands.

It is found in the secreted. Its function is as follows. Antimicrobial peptide. The protein is Pelophylaxin-3 of Pelophylax fukienensis (Fukien gold-striped pond frog).